Here is an 85-residue protein sequence, read N- to C-terminus: Progonadoliberin-2 (85 aa).

Positions 1–23 are cleaved as a signal peptide; it reads MCVSRLVLLFGLLLCVGAQLSNA. Gln24 bears the Pyrrolidone carboxylic acid mark. Glycine amide is present on Gly33.

This sequence belongs to the GnRH family.

The protein resides in the secreted. Stimulates the secretion of gonadotropins. In Dicentrarchus labrax (European seabass), this protein is Progonadoliberin-2 (gnrh2).